The sequence spans 168 residues: Leukotoxin-activating lysine-acyltransferase LtxC (168 aa).

Active-site residues include H23 and D92.

This sequence belongs to the RTX toxin acyltransferase family.

It localises to the cytoplasm. It carries out the reaction a fatty acyl-[ACP] + L-lysyl-[protein] = N(6)-(fatty acyl)-L-lysyl-[protein] + holo-[ACP] + H(+). Required for full activity and modification of the LtxA leukotoxin. Involved in fatty acid modification of the protoxin at two internal lysine residues, thereby converting it to the active toxin. The chain is Leukotoxin-activating lysine-acyltransferase LtxC from Aggregatibacter actinomycetemcomitans (Actinobacillus actinomycetemcomitans).